A 1370-amino-acid polypeptide reads, in one-letter code: Histidine kinase P4 (1370 aa).

An N-terminal signal peptide occupies residues 1 to 20 (MRNIGVFSVILFSFLAISLK). Residues 799 to 819 (WAFCLYALCIGTALIALISFL) traverse the membrane as a helical segment. One can recognise a Histidine kinase domain in the interval 852–1072 (NISHEFRTPL…IFRVSLPLGR (221 aa)). His855 carries the post-translational modification Phosphohistidine; by autocatalysis. Residues 1119–1234 (TILIVEDHKP…EFRLRIKNIL (116 aa)) enclose the Response regulatory domain. A 4-aspartylphosphate modification is found at Asp1167. The region spanning 1266–1365 (KKAFKIVEDN…NETPSQYQNR (100 aa)) is the HTH araC/xylS-type domain. DNA-binding regions (H-T-H motif) lie at residues 1284–1305 (LAFS…KAWT) and 1332–1355 (ISQI…QKKF).

Post-translationally, autophosphorylated. Activation requires a sequential transfer of a phosphate group from a His in the primary transmitter domain, to an Asp in the receiver domain and to a His in the secondary transmitter domain.

The protein localises to the membrane. The protein resides in the cell surface. It carries out the reaction ATP + protein L-histidine = ADP + protein N-phospho-L-histidine.. Histidine kinase probably involved in ulvan degradation. Ulvan is the main polysaccharide component of the Ulvales (green seaweed) cell wall. It is composed of disaccharide building blocks comprising 3-sulfated rhamnose (Rha3S) linked to D-glucuronic acid (GlcA), L-iduronic acid (IduA), or D-xylose (Xyl). This Formosa agariphila (strain DSM 15362 / KCTC 12365 / LMG 23005 / KMM 3901 / M-2Alg 35-1) protein is Histidine kinase P4.